Reading from the N-terminus, the 540-residue chain is MAGGRSGSRELPETPTWAVAVVCAVLVLVSAAMEHGLHNLSHWFRRRQKKAMGDALDKIKAELMLLGFISLLLTVAQAPISKICIPKSAANILLPCKAGQDAIEEEAASGRRSLAGAGGGDYCSKFDGKVALMSAKSMHQLHIFIFVLAVFHVTYCIITMGLGRLKMKKWKKWESQTNSLEYQFAIDPSRFRFTHQTSFVKRHLGSFSSTPGLRWIVAFFRQFFGSVTKVDYLTMRQGFINAHLSQNSKFDFHKYIKRSLEDDFKVVVGISLPLWFVGILVLFLDIHGLGTLIWISFVPLIIVLLVGTKLEMVIMEMAQEIQDRATVIQGAPMVEPSNKYFWFNRPDWVLFFIHLTLFHNAFQMAHFVWTMATPGLKKCFHENIWLSIVEVIVGISLQVLCSYITFPLYALVTQMGSNMKKTIFEEQTMKALMNWRKKAMEKKKVRDADAFLAQMSVDFATPASSRSASPVHLLQDHRARSDDPPSPITVASPPAPEEDMYPVPAAAASRQLLDDPPDRRWMASSSADIADSDFSFSAQR.

Topologically, residues 1–16 (MAGGRSGSRELPETPT) are extracellular. A helical membrane pass occupies residues 17–37 (WAVAVVCAVLVLVSAAMEHGL). Topologically, residues 38-60 (HNLSHWFRRRQKKAMGDALDKIK) are cytoplasmic. Residues 61 to 81 (AELMLLGFISLLLTVAQAPIS) form a helical membrane-spanning segment. Residues 82–142 (KICIPKSAAN…MSAKSMHQLH (61 aa)) are Extracellular-facing. A helical transmembrane segment spans residues 143–163 (IFIFVLAVFHVTYCIITMGLG). The Cytoplasmic portion of the chain corresponds to 164 to 265 (RLKMKKWKKW…IKRSLEDDFK (102 aa)). Residues 266 to 286 (VVVGISLPLWFVGILVLFLDI) form a helical membrane-spanning segment. H287 is a topological domain (extracellular). Residues 288–308 (GLGTLIWISFVPLIIVLLVGT) traverse the membrane as a helical segment. The Cytoplasmic segment spans residues 309–347 (KLEMVIMEMAQEIQDRATVIQGAPMVEPSNKYFWFNRPD). Residues 348-368 (WVLFFIHLTLFHNAFQMAHFV) form a helical membrane-spanning segment. Topologically, residues 369 to 383 (WTMATPGLKKCFHEN) are extracellular. Residues 384–404 (IWLSIVEVIVGISLQVLCSYI) form a helical membrane-spanning segment. Residues 405 to 540 (TFPLYALVTQ…DSDFSFSAQR (136 aa)) are Cytoplasmic-facing. The tract at residues 426-447 (EQTMKALMNWRKKAMEKKKVRD) is calmodulin-binding. The tract at residues 468–526 (ASPVHLLQDHRARSDDPPSPITVASPPAPEEDMYPVPAAAASRQLLDDPPDRRWMASSS) is disordered. 2 stretches are compositionally biased toward basic and acidic residues: residues 474-483 (LQDHRARSDD) and 512-521 (LLDDPPDRRW).

Belongs to the MLO family.

The protein localises to the membrane. Functionally, may be involved in modulation of pathogen defense and leaf cell death. Activity seems to be regulated by Ca(2+)-dependent calmodulin binding and seems not to require heterotrimeric G proteins. The sequence is that of MLO protein homolog 1 (MLO1) from Oryza sativa subsp. indica (Rice).